Here is a 1334-residue protein sequence, read N- to C-terminus: Aldehyde oxidase 1 (1334 aa).

In terms of domain architecture, 2Fe-2S ferredoxin-type spans 5-92 (PELLFYVNGR…GAAVTTVEGI (88 aa)). Residues Cys44, Cys49, Cys52, and Cys74 each contribute to the [2Fe-2S] cluster site. Position 113 (Gln113) interacts with Mo-molybdopterin. Cys114, Cys117, Cys149, and Cys151 together coordinate [2Fe-2S] cluster. Cys151 is a binding site for Mo-molybdopterin. The FAD-binding PCMH-type domain maps to 236 to 421 (FSGERMMWIS…ASVHIPYSRK (186 aa)). FAD is bound by residues 264–271 (VVMGNTSV), Ala345, Ser354, His358, Asp367, and Leu411. Mo-molybdopterin contacts are provided by residues 802–803 (AF) and Met1043. Ser1064 is subject to Phosphoserine. Residues 1084–1087 (GSVV), Gln1199, and Leu1264 each bind Mo-molybdopterin. Catalysis depends on Glu1266, which acts as the Proton acceptor; for azaheterocycle hydroxylase activity.

This sequence belongs to the xanthine dehydrogenase family. In terms of assembly, homodimer. [2Fe-2S] cluster is required as a cofactor. FAD serves as cofactor. It depends on Mo-molybdopterin as a cofactor. In terms of processing, the N-terminus is blocked. Very high expression in liver and lung. High expression in kidney, pancreas, brain stem and spinal cord. Moderate expression in heart, testis, eye, cerebral cortex and cerebellum. Low expression in stomach and muscle.

It localises to the cytoplasm. It catalyses the reaction an aldehyde + O2 + H2O = a carboxylate + H2O2 + H(+). It carries out the reaction retinal + O2 + H2O = retinoate + H2O2 + H(+). The catalysed reaction is all-trans-retinal + O2 + H2O = all-trans-retinoate + H2O2 + H(+). Its activity is regulated as follows. Inhibited by hydralazine and menadione. Not inhibited by BOF-4272 or allopurinol, xanthine dehydrogenase potent inhibitors. In contrast to guinea pig, human and rat, isovanillin is not an inhibitor but a substrate for AOX1 in rabbit. Its function is as follows. Oxidase with broad substrate specificity, oxidizing aromatic azaheterocycles, such as N1-methylnicotinamide, N-methylphthalazinium and phthalazine, as well as aldehydes, such as benzaldehyde, retinal, pyridoxal, and vanillin. Plays a key role in the metabolism of xenobiotics and drugs containing aromatic azaheterocyclic substituents. Participates in the bioactivation of prodrugs such as famciclovir, catalyzing the oxidation step from 6-deoxypenciclovir to penciclovir, which is a potent antiviral agent. Is probably involved in the regulation of reactive oxygen species homeostasis. May be a prominent source of superoxide generation via the one-electron reduction of molecular oxygen. May also catalyze nitric oxide (NO) production via the reduction of nitrite to NO with NADH or aldehyde as electron donor. May play a role in adipogenesis. Cannot use hypoxanthine and all-trans-retinol as substrate. This Oryctolagus cuniculus (Rabbit) protein is Aldehyde oxidase 1.